The sequence spans 268 residues: Interleukin-1 alpha (268 aa).

Positions 1–112 (MAKVPDLFED…NTEEEIIKPR (112 aa)) are excised as a propeptide. Lys-82 is modified (N6-acetyllysine). The nuclear localization signal (NLS) stretch occupies residues 82-86 (KKRRL). Ser-87 is subject to Phosphoserine. N-linked (GlcNAc...) asparagine glycans are attached at residues Asn-102 and Asn-141.

This sequence belongs to the IL-1 family. As to quaternary structure, monomer. Interacts with TMED10; the interaction mediates the translocation from the cytoplasm into the ERGIC (endoplasmic reticulum-Golgi intermediate compartment) and thereby secretion. Interacts with IL1R1. Interacts with S100A13; this interaction is the first step in the export of IL1A, followed by direct translocation of this complex across the plasma membrane. In terms of processing, acetylated within its nuclear localization sequence, which impacts subcellular localization. Post-translationally, proteolytic processed by CAPN1 in a calcium-dependent manner. Cleavage from 31 kDa precursor to 18 kDa biologically active molecules. Phosphorylated. Phosphorylation greatly enhances susceptibility to digestion and promotes the conversion of pre-IL1A alpha to the biologically active IL1A.

It localises to the nucleus. It is found in the cytoplasm. Its subcellular location is the secreted. Cytokine constitutively present intracellularly in nearly all resting non-hematopoietic cells that plays an important role in inflammation and bridges the innate and adaptive immune systems. After binding to its receptor IL1R1 together with its accessory protein IL1RAP, forms the high affinity interleukin-1 receptor complex. Signaling involves the recruitment of adapter molecules such as MYD88, IRAK1 or IRAK4. In turn, mediates the activation of NF-kappa-B and the three MAPK pathways p38, p42/p44 and JNK pathways. Within the cell, acts as an alarmin and cell death results in its liberation in the extracellular space after disruption of the cell membrane to induce inflammation and alert the host to injury or damage. In addition to its role as a danger signal, which occurs when the cytokine is passively released by cell necrosis, directly senses DNA damage and acts as signal for genotoxic stress without loss of cell integrity. This Bubalus carabanensis (Swamp type water buffalo) protein is Interleukin-1 alpha (IL1A).